Here is a 108-residue protein sequence, read N- to C-terminus: Large ribosomal subunit protein uL23 (108 aa).

Belongs to the universal ribosomal protein uL23 family. As to quaternary structure, part of the 50S ribosomal subunit. Contacts protein L29, and trigger factor when it is bound to the ribosome.

One of the early assembly proteins it binds 23S rRNA. One of the proteins that surrounds the polypeptide exit tunnel on the outside of the ribosome. Forms the main docking site for trigger factor binding to the ribosome. This Polaromonas naphthalenivorans (strain CJ2) protein is Large ribosomal subunit protein uL23.